The primary structure comprises 355 residues: UPF0324 membrane protein PA5383 (355 aa).

The next 10 helical transmembrane spans lie at 20-37 (IPGL…ILLG), 44-66 (HNGI…TLYP), 71-93 (GSAA…LYGL), 100-122 (IAGV…FGLA), 137-159 (TLLI…EPVV), 166-188 (VAVA…PALF), 233-255 (AVIA…SAWL), 275-297 (WFAV…PALV), 307-324 (LLAM…LSAI), and 331-353 (PLLL…TRLA).

Belongs to the UPF0324 family.

Its subcellular location is the cell membrane. This Pseudomonas aeruginosa (strain ATCC 15692 / DSM 22644 / CIP 104116 / JCM 14847 / LMG 12228 / 1C / PRS 101 / PAO1) protein is UPF0324 membrane protein PA5383.